Reading from the N-terminus, the 216-residue chain is Elongation factor Ts (216 aa).

Residues 80–83 (TDFV) are involved in Mg(2+) ion dislocation from EF-Tu.

The protein belongs to the EF-Ts family.

The protein localises to the cytoplasm. Its function is as follows. Associates with the EF-Tu.GDP complex and induces the exchange of GDP to GTP. It remains bound to the aminoacyl-tRNA.EF-Tu.GTP complex up to the GTP hydrolysis stage on the ribosome. The sequence is that of Elongation factor Ts from Alkaliphilus oremlandii (strain OhILAs) (Clostridium oremlandii (strain OhILAs)).